Reading from the N-terminus, the 200-residue chain is Superoxide dismutase [Mn] (200 aa).

Residues histidine 27, histidine 77, aspartate 160, and histidine 164 each contribute to the Mn(2+) site.

It belongs to the iron/manganese superoxide dismutase family. As to quaternary structure, homodimer. It depends on Mn(2+) as a cofactor.

It carries out the reaction 2 superoxide + 2 H(+) = H2O2 + O2. In terms of biological role, destroys superoxide anion radicals which are normally produced within the cells and which are toxic to biological systems. This chain is Superoxide dismutase [Mn] (sodB), found in Rhizobium meliloti (strain 1021) (Ensifer meliloti).